The following is a 627-amino-acid chain: LGDVPRTSGAIFVARPESNHPDRFGLFGAPPLEEGYVVLVGDGRLKQFPPPSEFLLSVWNRSRAARLVCCSIVLCCLCLTVFLYLSENMGQTVTTPLSLTLDHWKDVERTAHNQSVEIRKRRWVTLCSAEWPTFNVGWPRDGTFNPDIITQVKIKVFSSGPHGHPDQVPYIVTWEALAADPPPWVKPFVHPKPPPLLLPPSAPSLPPEPPFPTPPQSSLYPALTSPLNTKPRPQVLPDSGGPLIDLLTEDPPPYRDPGPSSSDGNGGSGEVAPTEGAPDSSPMVSRLRGRREPPVADSTTSQAFPLRQGGNGQFQYWPFSSSDLYNWKNNNPSFSEDPAKLTALIESVLLTHQPTWDDCQQLLGTLLTGEEKQRVLLEARKAVRGEDGRPTQLPNDINDAFPLERPDWDYNTQRGRNHLVHYRQLLLAGLQNAGRSPTNLAKVKGITQGPNESPSAFLERLKEAYRRYTPYDPEDPGQETNVAMSFIWQSAPDIGRKLERLEDLKSKTLGDLVREAEKIFNKRETPEEREERIRRETEEKEERRRAEDEQREKERDRRRHREMSKLLATVISGQRQDRQGGERRRPQLDHDQCAYCKEKGHWARDCPKKPRGPRGPRPQASLLTLDD.

Residues 1-63 (LGDVPRTSGA…FLLSVWNRSR (63 aa)) lie on the Cytoplasmic side of the membrane. The chain crosses the membrane as a helical span at residues 64-86 (AARLVCCSIVLCCLCLTVFLYLS). The Extracellular segment spans residues 87 to 627 (ENMGQTVTTP…PQASLLTLDD (541 aa)). Asn-113 is a glycosylation site (N-linked (GlcNAc...) asparagine; by host). The span at 199–215 (PPSAPSLPPEPPFPTPP) shows a compositional bias: pro residues. Disordered stretches follow at residues 199 to 310 (PPSA…RQGG) and 523 to 627 (RETP…TLDD). 2 stretches are compositionally biased toward basic and acidic residues: residues 523 to 555 (RETPEEREERIRRETEEKEERRRAEDEQREKER) and 575 to 608 (RQDRQGGERRRPQLDHDQCAYCKEKGHWARDCPK). A CCHC-type zinc finger spans residues 593-608 (CAYCKEKGHWARDCPK).

Glycosylated by host. Post-translationally, cleaved by host near the middle of the molecule, releasing the c-terminal half containing capsid and nucleoprotein domains op GAG.

It is found in the host cell membrane. Functionally, plays a role in viral particle release. Presumably acts by facilitating the fission of the virion bud at the cell surface. May prevent the antiviral activity of murine APOBEC3. The chain is Glyco-Gag protein from Friend murine leukemia virus (isolate 57) (FrMLV).